The following is a 511-amino-acid chain: Lysine--tRNA ligase 2 (511 aa).

The interval 1-22 (MTMEINNTDPFEKMPLPDDSGL) is disordered. Residues Glu-421 and Glu-428 each contribute to the Mg(2+) site.

It belongs to the class-II aminoacyl-tRNA synthetase family. Homodimer. Requires Mg(2+) as cofactor.

The protein resides in the cytoplasm. The enzyme catalyses tRNA(Lys) + L-lysine + ATP = L-lysyl-tRNA(Lys) + AMP + diphosphate. In Methanosarcina mazei (strain ATCC BAA-159 / DSM 3647 / Goe1 / Go1 / JCM 11833 / OCM 88) (Methanosarcina frisia), this protein is Lysine--tRNA ligase 2.